Consider the following 345-residue polypeptide: 3-hydroxy-5-methyl-1-naphthoate 3-O-methyltransferase (345 aa).

Residue Asp205 coordinates S-adenosyl-L-methionine. Residue His252 is the Proton acceptor of the active site.

Belongs to the class I-like SAM-binding methyltransferase superfamily. Cation-independent O-methyltransferase family.

The catalysed reaction is 3-hydroxy-5-methyl-1-naphthoate + S-adenosyl-L-methionine = 3-methoxy-5-methyl-1-naphthoate + S-adenosyl-L-homocysteine + H(+). Its pathway is antibiotic biosynthesis. Inhibited by different divalent cations, such as Mg(2+), Mn(2+), Fe(2+), Cu(2+) and Zn(2+). Functionally, O-methyltransferase that mediates the formation of 3-methoxy-5-methyl-1-naphthoate from 3-hydroxy-5-methyl-1-naphthoate in the biosynthesis of the antitumor antibiotic azinomycin B. The chain is 3-hydroxy-5-methyl-1-naphthoate 3-O-methyltransferase from Streptomyces sahachiroi.